A 1006-amino-acid chain; its full sequence is Zinc finger protein ZFPM1 (1006 aa).

The segment covering 1 to 13 has biased composition (basic residues); the sequence is MSRRKQSNPRQIK. Disordered regions lie at residues 1-93 and 114-133; these read MSRR…DELE and SWGP…RQAE. The segment covering 15–25 has biased composition (basic and acidic residues); sequence SLGDMEAREEV. The segment covering 42–62 has biased composition (pro residues); sequence APSPPSADVNSPPPLPPPTSP. Over residues 66–79 the composition is skewed to basic and acidic residues; the sequence is KELEGQEPEPRPTE. Serine 84 and serine 128 each carry phosphoserine. Residues 121 to 130 show a composition bias toward polar residues; that stretch reads SVQTRASSPR. The CCHC FOG-type 1 zinc-finger motif lies at 235–268; the sequence is VINKDVFPCKDCGIWYRSERNLQAHLLYYCASRQ. 4 residues coordinate Zn(2+): cysteine 243, cysteine 246, histidine 259, and cysteine 264. Serine 272 is subject to Phosphoserine. 3 C2H2-type zinc fingers span residues 290 to 314, 320 to 342, and 348 to 371; these read RVCP…MRSH, FVCL…LKVH, and GVCH…VTNH. The interaction with TACC3 stretch occupies residues 330–341; that stretch reads TTKANCERHLKV. A Phosphoserine modification is found at serine 384. 3 disordered regions span residues 384-409, 438-460, and 473-515; these read SPGA…HTAL, NGEA…AAPR, and APIL…SPVP. Residues 485-515 show a composition bias toward low complexity; that stretch reads APSRTPSPRSPAPARVKAELSSPTPGSSPVP. 2 positions are modified to phosphoserine: serine 491 and serine 494. The CCHC FOG-type 2 zinc finger occupies 571–604; that stretch reads PGAPKGATCFECEITFSNVNNYYVHKRLYCSGRR. Zn(2+)-binding residues include cysteine 579, cysteine 582, histidine 595, and cysteine 600. Residues 605-681 form a disordered region; that stretch reads APEDAPAARR…SVDDAEDDPS (77 aa). The segment covering 617 to 629 has biased composition (pro residues); sequence APPGPARAPPGQP. Phosphoserine occurs at positions 638 and 671. A CCHC FOG-type 3 zinc finger spans residues 677 to 710; sequence EDDPSRTLCEACNIRFSRHETYTVHKRYYCASRH. Zn(2+) is bound by residues cysteine 685, cysteine 688, histidine 701, and cysteine 706. The disordered stretch occupies residues 708 to 810; that stretch reads SRHDPPPRRP…PRRPLPGAPA (103 aa). Composition is skewed to pro residues over residues 715 to 735 and 754 to 769; these read RRPA…PSPA and APPP…PESP. The span at 780-791 shows a compositional bias: low complexity; sequence GLAPARSPGPAA. Residue serine 786 is modified to Phosphoserine. The interval 794–800 is interaction with CTBP2; that stretch reads PIDLSKK. Residues 811–844 form a CCHC FOG-type 4 zinc finger; sequence PALADYHECTACRVSFHSLEAYLAHKKYSCPAAP. 4 residues coordinate Zn(2+): cysteine 819, cysteine 822, histidine 835, and cysteine 840. Residues 854–877 form a C2H2-type 4 zinc finger; the sequence is AACPYCPPNGPVRGDLLEHFRLAH. A disordered region spans residues 889-971; the sequence is GVEARTPADR…KGTPAPLPNG (83 aa). A phosphoserine mark is found at serine 901, serine 909, serine 914, and serine 935. The span at 925–950 shows a compositional bias: pro residues; sequence PQEPPPGPPPSPAAAPEAVPPPPAPP. The CCHC FOG-type 5 zinc finger occupies 968–1001; that stretch reads LPNGNHRYCRLCNIKFSSLSTFIAHKKYYCSSHA. Positions 976, 979, 992, and 997 each coordinate Zn(2+).

This sequence belongs to the FOG (Friend of GATA) family. In terms of assembly, interacts with corepressor CTBP2; this interaction is however not essential for corepressor activity. Interacts with the N-terminal zinc-finger of GATA1, GATA2 and probably GATA3. Mainly expressed in hematopoietic tissues. Also expressed in adult cerebellum, stomach, lymph node, liver and pancreas. Expressed in fetal heart, liver and spleen.

It is found in the nucleus. Transcription regulator that plays an essential role in erythroid and megakaryocytic cell differentiation. Essential cofactor that acts via the formation of a heterodimer with transcription factors of the GATA family GATA1, GATA2 and GATA3. Such heterodimer can both activate or repress transcriptional activity, depending on the cell and promoter context. The heterodimer formed with GATA proteins is essential to activate expression of genes such as NFE2, ITGA2B, alpha- and beta-globin, while it represses expression of KLF1. May be involved in regulation of some genes in gonads. May also be involved in cardiac development, in a non-redundant way with ZFPM2/FOG2. In Homo sapiens (Human), this protein is Zinc finger protein ZFPM1 (ZFPM1).